The following is a 291-amino-acid chain: Protein US2 (291 aa).

Gly-2 is modified (N-acetylglycine; by host). The disordered stretch occupies residues 223-281 (NKPRPASSRPHPATHPTQRPCFTCMGRPEIPDEPSWQTGDDDPQNPGPPLAVGDEWPPS).

The protein belongs to the herpesviridae HHV-1 US2 protein family. Interacts with host KRT18. Interacts with host MAP3K7; this interaction induces host NF-kappa-B pathway.

It is found in the virion. It localises to the host cytoplasm. Its subcellular location is the host cell surface. The protein localises to the host nucleus. Plays a role in the activation of the host NF-kappa-B pathway by interacting with and thus activating the component MAP3K7. The polypeptide is Protein US2 (Human herpesvirus 2 (strain HG52) (HHV-2)).